A 493-amino-acid chain; its full sequence is Farnesoate epoxidase (493 aa).

Residues 1–24 form the signal peptide; the sequence is MLALIVLCFILFFYIISRRHRGLC. Residue Cys433 coordinates heme.

It belongs to the cytochrome P450 family. The cofactor is heme. In terms of tissue distribution, constitutively expressed in corpora allata from the first instar larval to adult stages.

It catalyses the reaction (2E,6E)-farnesoate + reduced [NADPH--hemoprotein reductase] + O2 = juvenile hormone III carboxylate + oxidized [NADPH--hemoprotein reductase] + H2O + H(+). Its function is as follows. Catalyzes the conversion of farnesoate to juvenile hormone III acid in juvenile hormone biosynthesis. This Bombyx mori (Silk moth) protein is Farnesoate epoxidase.